The following is a 621-amino-acid chain: MDKNTLVGFALIGAVVIGFSIYNRPSQEEMARAKHYQDSIQAIAQKEAERLAQAATAQSQNATLHLDSTSMFYGANQGTEQLTTLENNVVKLTFTNKGGRVCAAILKDYNGQDGKPLMLFDEKDSGMNFAFEGKNENILTEDMYFQPTNVTDSTVTMRLAANNGGYIDFDYKLLPDAYMVNFTIRANGMQNFFPPALNTVNINWRQRARQLEKGFSFEQRYTSLTYKPVEKSSDYLNEMKEAKEDVTDRLDWIAFKNQFFSSVLIADQDFDKASLTSTPQQEGSGYMKNYTADMTTFFDPTGKQPTDMQFYFGPNHFKTLLNSNDLSLSQKDLELEDLVYLGWPIIRWVNRWFTINLFDWLSGWGLSMGVVLLLMTIIVKVLVYPATYKSYMSSAKMRVLKPYINEINAKYPKKEDALKKQQETMALYSKYGVSPMGGCLPMLIQMPVFMALFFFVPNAIELRQQSFLWAPDLSTYDDIINWGTNIPLLGNHLSLFCLLFSITNILNTMYTMKQQDMGQQQMPGMKLMMYIMPVMFIFIFNGYSSGLNYYYFISGLIGILTMVILRKTTDEKKLLAMLEARKEKKSQKNGGKPGGGLMAKLEALQKEQERLQQERMNKGKK.

6 helical membrane-spanning segments follow: residues 1 to 21, 363 to 383, 436 to 456, 486 to 506, 527 to 547, and 549 to 569; these read MDKN…GFSI, GWGL…KVLV, MGGC…FFFV, IPLL…TNIL, LMMY…SSGL, and YYYF…RKTT.

Belongs to the OXA1/ALB3/YidC family. Type 1 subfamily. In terms of assembly, interacts with the Sec translocase complex via SecD. Specifically interacts with transmembrane segments of nascent integral membrane proteins during membrane integration.

The protein localises to the cell inner membrane. Required for the insertion and/or proper folding and/or complex formation of integral membrane proteins into the membrane. Involved in integration of membrane proteins that insert both dependently and independently of the Sec translocase complex, as well as at least some lipoproteins. Aids folding of multispanning membrane proteins. The chain is Membrane protein insertase YidC from Phocaeicola vulgatus (strain ATCC 8482 / DSM 1447 / JCM 5826 / CCUG 4940 / NBRC 14291 / NCTC 11154) (Bacteroides vulgatus).